A 171-amino-acid polypeptide reads, in one-letter code: MEERGDSEPTPGCSGLGPGGVRGFGDGGGAPSWAPEDAWMGTHPKYLEMMELDIGDATQVYVAFLVYLDLMESKSWHEVNCVGLPELQLICLVGTEIEGEGLQTVVPTPITASLSHNRIREILKASRKLQGDPDLPMSFTLAIVESDSTIVYYKLTDGFMLPDPQNISLRR.

The interval 1 to 35 (MEERGDSEPTPGCSGLGPGGVRGFGDGGGAPSWAP) is disordered. Position 7 is a phosphoserine (serine 7). The span at 14-30 (SGLGPGGVRGFGDGGGA) shows a compositional bias: gly residues. Position 168 is a phosphoserine (serine 168).

The protein belongs to the SEN15 family. As to quaternary structure, homodimer. tRNA splicing endonuclease is a heterotetramer composed of TSEN2, TSEN15, TSEN34/LENG5 and TSEN54. tRNA splicing endonuclease complex also contains proteins of the Pre-mRNA 3' end processing machinery, such as CLP1, CPSF1, CPSF4 and CSTF2. In terms of tissue distribution, widely expressed. Highly expressed in testis and uterus.

It localises to the nucleus. The protein resides in the nucleolus. Functionally, non-catalytic subunit of the tRNA-splicing endonuclease complex, a complex responsible for identification and cleavage of the splice sites in pre-tRNA. It cleaves pre-tRNA at the 5' and 3' splice sites to release the intron. The products are an intron and two tRNA half-molecules bearing 2',3' cyclic phosphate and 5'-OH termini. There are no conserved sequences at the splice sites, but the intron is invariably located at the same site in the gene, placing the splice sites an invariant distance from the constant structural features of the tRNA body. The tRNA splicing endonuclease is also involved in mRNA processing via its association with pre-mRNA 3'-end processing factors, establishing a link between pre-tRNA splicing and pre-mRNA 3'-end formation, suggesting that the endonuclease subunits function in multiple RNA-processing events. This is tRNA-splicing endonuclease subunit Sen15 (TSEN15) from Homo sapiens (Human).